A 430-amino-acid polypeptide reads, in one-letter code: Tol-Pal system protein TolB (430 aa).

Positions 1–21 (MKQALRVAFGFLMLWAAVLHA) are cleaved as a signal peptide.

This sequence belongs to the TolB family. The Tol-Pal system is composed of five core proteins: the inner membrane proteins TolA, TolQ and TolR, the periplasmic protein TolB and the outer membrane protein Pal. They form a network linking the inner and outer membranes and the peptidoglycan layer.

It localises to the periplasm. In terms of biological role, part of the Tol-Pal system, which plays a role in outer membrane invagination during cell division and is important for maintaining outer membrane integrity. TolB occupies a key intermediary position in the Tol-Pal system because it communicates directly with both membrane-embedded components, Pal in the outer membrane and TolA in the inner membrane. The protein is Tol-Pal system protein TolB of Salmonella enteritidis PT4 (strain P125109).